A 489-amino-acid chain; its full sequence is MQWEVVIGLETHAQLQTQSKIFSGASTRFGAEPNTQACAVDLALPGVLPVLNREAVEHAIRFGLAVNAKISPASIFARKNYFYPDLPKGYQISQMEIPVVVGGHVEILVGDEVKVVELTRAHMEEDAGKSVHEEDFTGPYGEPSSGIDLNRAGTPLLEIVTEPVMRSAAEAVAYAKALHGLVVWLGVCDGNMQEGSFRCDANVSVRPKGQVEFGTRCEIKNLNSFRFLEEAIQYEVRRQIELIEDGGTVVQETRLYDPDRGETRSMRSKEDANDYRYFPDPDLLPVVIDDAWIEDVRSKMPALPAQLREQWQSEFGLSAYDAQLLTQDRDTAKVFEELLAIVGKPLAKAAANLITGEFASSLNRAGIAAANAPLKAEHLASLLTRVADGTISHKIAKDIFAILWEEAIAGKAISTVDQVIEAKGLKQISDSGAIEAIIDQVLAVNQKSVEEFRSGKEKAFNALVGQIMKASQGKANPGQVNELLRKKLG.

This sequence belongs to the GatB/GatE family. GatB subfamily. In terms of assembly, heterotrimer of A, B and C subunits.

The enzyme catalyses L-glutamyl-tRNA(Gln) + L-glutamine + ATP + H2O = L-glutaminyl-tRNA(Gln) + L-glutamate + ADP + phosphate + H(+). It catalyses the reaction L-aspartyl-tRNA(Asn) + L-glutamine + ATP + H2O = L-asparaginyl-tRNA(Asn) + L-glutamate + ADP + phosphate + 2 H(+). In terms of biological role, allows the formation of correctly charged Asn-tRNA(Asn) or Gln-tRNA(Gln) through the transamidation of misacylated Asp-tRNA(Asn) or Glu-tRNA(Gln) in organisms which lack either or both of asparaginyl-tRNA or glutaminyl-tRNA synthetases. The reaction takes place in the presence of glutamine and ATP through an activated phospho-Asp-tRNA(Asn) or phospho-Glu-tRNA(Gln). This Polynucleobacter asymbioticus (strain DSM 18221 / CIP 109841 / QLW-P1DMWA-1) (Polynucleobacter necessarius subsp. asymbioticus) protein is Aspartyl/glutamyl-tRNA(Asn/Gln) amidotransferase subunit B.